Consider the following 123-residue polypeptide: Insulin-like peptide-1 (123 aa).

A signal peptide spans Met-1–Gly-24. 4 cysteine pairs are disulfide-bonded: Cys-29-Cys-106, Cys-41-Cys-109, Cys-53-Cys-122, and Cys-108-Cys-113. 4-hydroxyproline; partial is present on Pro-34. Positions Glu-59–Arg-102 are cleaved as a propeptide — c peptide. Position 107 is a 4-carboxyglutamate (Glu-107). 4-carboxyglutamate; partial is present on Glu-117.

Belongs to the insulin family. As to quaternary structure, heterodimer of A and B chains; disulfide-linked. As to expression, expressed by the venom duct.

The protein localises to the secreted. In terms of biological role, this venom insulin facilitates prey capture by rapidly inducing hypoglycemic shock. Intraperitoneal injection of this peptide into zebrafish lowers blood glucose with the same potency than human insulin. In vivo, when applied to water, this peptide reduces overall locomotor activity of zebrafish larvae, observed as a significant decrease in the percentage of time spent swimming and movement frequency. This chain is Insulin-like peptide-1, found in Conus victoriae (Queen Victoria cone).